The following is a 525-amino-acid chain: uncharacterized protein (525 aa).

The signal sequence occupies residues 1–21 (MLECLSALLVLFAGGGGSVLA). Topologically, residues 22-448 (AVQSKTVADP…ISAASQLDKR (427 aa)) are extracellular. The interval 242–264 (KVSSENCSKDTDDKSGSKKERNT) is disordered. Residues 449-469 (IFIFTAITVSITTLMMLGFSY) form a helical membrane-spanning segment. Over 470-525 (RSRVSFRDHSIDDSDDDNDWSDDEVEFDEEYFYSLPVSIPEKGISLDKMAQQLGVE) the chain is Cytoplasmic.

It localises to the membrane. This is an uncharacterized protein from Saccharomyces cerevisiae (strain YJM789) (Baker's yeast).